A 288-amino-acid polypeptide reads, in one-letter code: Light-independent protochlorophyllide reductase iron-sulfur ATP-binding protein (288 aa).

Residues 10–15 and Lys-39 contribute to the ATP site; that span reads GIGKST. Mg(2+) is bound at residue Ser-14. [4Fe-4S] cluster contacts are provided by Cys-95 and Cys-129. Residues 180–181 and 204–206 each bind ATP; these read NR and PLL.

The protein belongs to the NifH/BchL/ChlL family. In terms of assembly, homodimer. Protochlorophyllide reductase is composed of three subunits; ChlL, ChlN and ChlB. The cofactor is [4Fe-4S] cluster.

It is found in the plastid. The protein localises to the chloroplast. The catalysed reaction is chlorophyllide a + oxidized 2[4Fe-4S]-[ferredoxin] + 2 ADP + 2 phosphate = protochlorophyllide a + reduced 2[4Fe-4S]-[ferredoxin] + 2 ATP + 2 H2O. It participates in porphyrin-containing compound metabolism; chlorophyll biosynthesis (light-independent). Functionally, component of the dark-operative protochlorophyllide reductase (DPOR) that uses Mg-ATP and reduced ferredoxin to reduce ring D of protochlorophyllide (Pchlide) to form chlorophyllide a (Chlide). This reaction is light-independent. The L component serves as a unique electron donor to the NB-component of the complex, and binds Mg-ATP. The polypeptide is Light-independent protochlorophyllide reductase iron-sulfur ATP-binding protein (Stigeoclonium helveticum (Green alga)).